The following is a 131-amino-acid chain: Small ribosomal subunit protein uS8 (131 aa).

Belongs to the universal ribosomal protein uS8 family. In terms of assembly, part of the 30S ribosomal subunit. Contacts proteins S5 and S12.

In terms of biological role, one of the primary rRNA binding proteins, it binds directly to 16S rRNA central domain where it helps coordinate assembly of the platform of the 30S subunit. This Legionella pneumophila subsp. pneumophila (strain Philadelphia 1 / ATCC 33152 / DSM 7513) protein is Small ribosomal subunit protein uS8.